The following is a 252-amino-acid chain: MACIDLNADLGEGFGVWRLGDDEAMLRIVTSANVACGFHAGDPAGLLRVCRLAAERGVRIGAQVSYRDLVGFGRRFIDVTADDLLADVVYQIGALQAIAQTAGSAVSYVKPHGALYNTIVTNREQGAAVAAAIQLVDSTLPVLGLAGSTFFDEAARIGLRTVAEAFADRTYRPDGQLISRREPGAVLHDPAVIAQRVVTMVTTGKATAVDGTQLAVTVESICLHGDSPNAIQMATAVRDQLNAAGIDIRAFC.

Belongs to the LamB/PxpA family. As to quaternary structure, forms a complex composed of PxpA, PxpB and PxpC.

The catalysed reaction is 5-oxo-L-proline + ATP + 2 H2O = L-glutamate + ADP + phosphate + H(+). Functionally, catalyzes the cleavage of 5-oxoproline to form L-glutamate coupled to the hydrolysis of ATP to ADP and inorganic phosphate. This chain is 5-oxoprolinase subunit A, found in Mycobacterium leprae (strain Br4923).